A 545-amino-acid chain; its full sequence is Chaperonin GroEL (545 aa).

ATP-binding positions include 29-32 (TLGP), Lys50, 86-90 (DGTTT), Gly413, and Asp495.

The protein belongs to the chaperonin (HSP60) family. In terms of assembly, forms a cylinder of 14 subunits composed of two heptameric rings stacked back-to-back. Interacts with the co-chaperonin GroES.

Its subcellular location is the cytoplasm. It carries out the reaction ATP + H2O + a folded polypeptide = ADP + phosphate + an unfolded polypeptide.. Functionally, together with its co-chaperonin GroES, plays an essential role in assisting protein folding. The GroEL-GroES system forms a nano-cage that allows encapsulation of the non-native substrate proteins and provides a physical environment optimized to promote and accelerate protein folding. This chain is Chaperonin GroEL, found in Borrelia garinii subsp. bavariensis (strain ATCC BAA-2496 / DSM 23469 / PBi) (Borreliella bavariensis).